The chain runs to 492 residues: Stromelysin-3 (492 aa).

The N-terminal stretch at 1–35 (MARAACLLRAISRVLLLPLPLLLLLLLLLPSPLMA) is a signal peptide. A propeptide spans 36–101 (RARPPESHRH…VLNARNRQKR (66 aa)) (activation peptide). The Cysteine switch signature appears at 82-89 (LRCGVPDL). Zn(2+) contacts are provided by C84, H168, and D170. 4 residues coordinate Ca(2+): D175, G176, G178, and I180. 3 residues coordinate Zn(2+): H183, H196, and H219. The active site involves E220. Zn(2+)-binding residues include H223 and H229. Hemopexin repeat units lie at residues 295–343 (PDVC…WQGL), 344–386 (PSPV…KLGL), 388–436 (GSPV…WRGV), and 437–484 (PSEI…FFDC). Residues C298 and C484 are joined by a disulfide bond.

The protein belongs to the peptidase M10A family. It depends on Ca(2+) as a cofactor. Zn(2+) is required as a cofactor. In terms of processing, the precursor is cleaved by a furin endopeptidase. As to expression, specifically expressed in the mammary gland during apoptosis.

Its subcellular location is the secreted. The protein resides in the extracellular space. The protein localises to the extracellular matrix. Functionally, may play an important role in the progression of epithelial malignancies. This chain is Stromelysin-3 (Mmp11), found in Mus musculus (Mouse).